Reading from the N-terminus, the 347-residue chain is Protease HtpX homolog (347 aa).

Transmembrane regions (helical) follow at residues 8–28 (IAFG…VVIA), 46–66 (ALTA…IAIV), and 76–96 (WGFI…TYIA). His-174 contributes to the Zn(2+) binding site. Residue Glu-175 is part of the active site. His-178 lines the Zn(2+) pocket. Transmembrane regions (helical) follow at residues 185-205 (ALML…VSSV) and 221-241 (LLAA…LLVL). Glu-248 serves as a coordination point for Zn(2+).

It belongs to the peptidase M48B family. The cofactor is Zn(2+).

It is found in the cell membrane. This Pyrobaculum islandicum (strain DSM 4184 / JCM 9189 / GEO3) protein is Protease HtpX homolog.